Consider the following 210-residue polypeptide: Phosphate propanoyltransferase (210 aa).

26–28 (ISN) is a CoA binding site. Residues histidine 30 and histidine 32 each contribute to the Zn(2+) site. The CoA site is built by lysine 71 and arginine 78. Phosphate is bound at residue arginine 84. Zn(2+) is bound by residues glutamate 90, histidine 138, histidine 140, and histidine 186. Residue asparagine 193 participates in CoA binding.

Belongs to the PduL family. Zn(2+) is required as a cofactor.

It localises to the bacterial microcompartment. The enzyme catalyses propanoyl-CoA + phosphate = propanoyl phosphate + CoA. Its pathway is polyol metabolism; 1,2-propanediol degradation. Its function is as follows. Involved in 1,2-propanediol (1,2-PD) utilization within the bacterial microcompartment (BMC) dedicated to 1,2-PD degradation by catalyzing the conversion of propanoyl-CoA to propanoyl-phosphate. Required for optimal growth on 1,2-PD. CoA is regenerated within the BMC (for use by PduP) via this enzyme, although there must also be cofactor transport across the BMC. Directly targeted to the BMC. Expression of a cosmid containing the full 21-gene pdu operon in E.coli allows E.coli to grow on 1,2-propanediol (1,2-PD) with the appearance of bacterial microcompartments (BMC) in its cytoplasm. In terms of biological role, the 1,2-PD-specific bacterial microcompartment (BMC) concentrates low levels of 1,2-PD catabolic enzymes, concentrates volatile reaction intermediates thus enhancing pathway flux and keeps the level of toxic, mutagenic propionaldehyde low. This is Phosphate propanoyltransferase from Citrobacter freundii.